The chain runs to 160 residues: uncharacterized protein (160 aa).

The first 27 residues, 1–27 (MVIGRKAGIIIYVMHALLLLLLSFTFA), serve as a signal peptide directing secretion.

This is an uncharacterized protein from Aquifex aeolicus (strain VF5).